We begin with the raw amino-acid sequence, 415 residues long: 3-isopropylmalate dehydratase large subunit (415 aa).

Residues C295, C353, and C356 each coordinate [4Fe-4S] cluster.

The protein belongs to the aconitase/IPM isomerase family. LeuC type 2 subfamily. In terms of assembly, heterodimer of LeuC and LeuD. The cofactor is [4Fe-4S] cluster.

The catalysed reaction is (2R,3S)-3-isopropylmalate = (2S)-2-isopropylmalate. It participates in amino-acid biosynthesis; L-leucine biosynthesis; L-leucine from 3-methyl-2-oxobutanoate: step 2/4. Its function is as follows. Catalyzes the isomerization between 2-isopropylmalate and 3-isopropylmalate, via the formation of 2-isopropylmaleate. The polypeptide is 3-isopropylmalate dehydratase large subunit (Pyrobaculum aerophilum (strain ATCC 51768 / DSM 7523 / JCM 9630 / CIP 104966 / NBRC 100827 / IM2)).